The sequence spans 118 residues: UPF0102 protein RHA1_ro06551 (118 aa).

This sequence belongs to the UPF0102 family.

This is UPF0102 protein RHA1_ro06551 from Rhodococcus jostii (strain RHA1).